The primary structure comprises 239 residues: Dihydromethanopterin reductase (acceptor) (239 aa).

4Fe-4S ferredoxin-type domains are found at residues 144–175 (MPYNIDRKQCKHCETCPPRENCPHEAISEKNG) and 176–205 (VTDQIDLLKCKGCGICKELCPYNAIKGGPV). Positions 153, 156, 159, 165, 185, 188, 191, and 195 each coordinate [4Fe-4S] cluster.

As to quaternary structure, homodimer. It depends on [4Fe-4S] cluster as a cofactor.

It carries out the reaction 5,6,7,8-tetrahydromethanopterin + A = 7,8-dihydromethanopterin + AH2. It functions in the pathway cofactor biosynthesis; 5,6,7,8-tetrahydromethanopterin biosynthesis. Involved in the biosynthesis of tetrahydromethanopterin, a coenzyme used in methanogenesis. Catalyzes the reduction of dihydromethanopterin (H(2)MPT) to tetrahydromethanopterin (H(4)MPT). Ferredoxin may serve as an electron donor. The polypeptide is Dihydromethanopterin reductase (acceptor) (Methanosarcina mazei (strain ATCC BAA-159 / DSM 3647 / Goe1 / Go1 / JCM 11833 / OCM 88) (Methanosarcina frisia)).